The following is a 1651-amino-acid chain: Putative serine/threonine-protein kinase/receptor R818 (1651 aa).

Residues 1 to 19 form the signal peptide; that stretch reads MKSIGIFVVALWLTHFCDG. Residues asparagine 111, asparagine 135, asparagine 190, asparagine 236, asparagine 275, asparagine 276, asparagine 287, asparagine 452, asparagine 455, asparagine 477, asparagine 495, asparagine 540, asparagine 596, and asparagine 722 are each glycosylated (N-linked (GlcNAc...) asparagine; by host). A helical transmembrane segment spans residues 749–769; the sequence is IILAIVIPVSFVICCIIIVLV. A Protein kinase 1 domain is found at 793–1057; it reads LDFMESLGSG…EIMTKLSTLI (265 aa). ATP contacts are provided by residues 799–807 and lysine 820; that span reads LGSGGSGEV. The active-site Proton acceptor is aspartate 915. The tract at residues 1089–1115 is disordered; the sequence is IHNNDETKNSFGSTTYGSNTISSSSNT. Residues 1100–1115 are compositionally biased toward low complexity; it reads GSTTYGSNTISSSSNT. The region spanning 1135 to 1278 is the Guanylate cyclase domain; the sequence is IIVFTDIISA…VTVNIAAKIT (144 aa). The 252-residue stretch at 1394-1645 folds into the Protein kinase 2 domain; the sequence is IQIGKQIGVG…DVIMGLNDML (252 aa). ATP is bound by residues 1400-1408 and lysine 1421; that span reads IGVGSYGIV. Aspartate 1515 acts as the Proton acceptor in catalysis.

The protein localises to the membrane. It catalyses the reaction L-seryl-[protein] + ATP = O-phospho-L-seryl-[protein] + ADP + H(+). The enzyme catalyses L-threonyl-[protein] + ATP = O-phospho-L-threonyl-[protein] + ADP + H(+). This chain is Putative serine/threonine-protein kinase/receptor R818, found in Acanthamoeba polyphaga mimivirus (APMV).